A 459-amino-acid polypeptide reads, in one-letter code: Cysteine--tRNA ligase (459 aa).

C28 is a Zn(2+) binding site. The 'HIGH' region signature appears at 30–40 (VTIYDLCHIGH). Residues C209, H234, and E238 each contribute to the Zn(2+) site. The short motif at 266 to 270 (KMSKS) is the 'KMSKS' region element. K269 is an ATP binding site.

The protein belongs to the class-I aminoacyl-tRNA synthetase family. As to quaternary structure, monomer. Requires Zn(2+) as cofactor.

The protein localises to the cytoplasm. It carries out the reaction tRNA(Cys) + L-cysteine + ATP = L-cysteinyl-tRNA(Cys) + AMP + diphosphate. This is Cysteine--tRNA ligase from Shewanella loihica (strain ATCC BAA-1088 / PV-4).